Consider the following 106-residue polypeptide: Large ribosomal subunit protein eL42A (106 aa).

At Lys-40 the chain carries N6-methyllysine; by RKM3. The residue at position 55 (Lys-55) is an N6-methyllysine; by RKM4.

It belongs to the eukaryotic ribosomal protein eL42 family. In terms of assembly, component of the large ribosomal subunit (LSU). Mature yeast ribosomes consist of a small (40S) and a large (60S) subunit. The 40S small subunit contains 1 molecule of ribosomal RNA (18S rRNA) and 33 different proteins (encoded by 57 genes). The large 60S subunit contains 3 rRNA molecules (25S, 5.8S and 5S rRNA) and 46 different proteins (encoded by 81 genes). Post-translationally, in wild-type cells, 78% of L42 is monomethylated at both Lys-40 and Lys-55, and 22% are a mixture of species with either residue monomethylated.

Its subcellular location is the cytoplasm. Its function is as follows. Component of the ribosome, a large ribonucleoprotein complex responsible for the synthesis of proteins in the cell. The small ribosomal subunit (SSU) binds messenger RNAs (mRNAs) and translates the encoded message by selecting cognate aminoacyl-transfer RNA (tRNA) molecules. The large subunit (LSU) contains the ribosomal catalytic site termed the peptidyl transferase center (PTC), which catalyzes the formation of peptide bonds, thereby polymerizing the amino acids delivered by tRNAs into a polypeptide chain. The nascent polypeptides leave the ribosome through a tunnel in the LSU and interact with protein factors that function in enzymatic processing, targeting, and the membrane insertion of nascent chains at the exit of the ribosomal tunnel. The polypeptide is Large ribosomal subunit protein eL42A (Saccharomyces cerevisiae (strain ATCC 204508 / S288c) (Baker's yeast)).